The following is an 81-amino-acid chain: Protein GPR15LG (81 aa).

Positions 1 to 24 are cleaved as a signal peptide; that stretch reads MRFLALTSLLCILLLCLSFFSAEG. 2 disulfide bridges follow: Cys40-Cys63 and Cys41-Cys60.

In terms of assembly, interacts with SUSD2; the interaction is direct.

It is found in the secreted. Functionally, highly cationic protein that has multiple functions. Acts as a chemotactic factor that mediates lymphocytes recruitment to epithelia through binding and activation of the G-protein coupled receptor GPR15. May be a tumor suppressor; together with SUSD2 has a growth inhibitory effect on colon cancer cells which includes G1 cell cycle arrest. May regulate keratinocyte proliferation. In addition, through activation of Mas-related G protein-coupled receptors (MRGPRs) contributes to pruritogenesis by activating itch-selective sensory neurons and mast cells degranulation. Has antimicrobial activity against Gram-positive bacteria, including Staphylococcus aureus and Actinomyces spec., and Mycoplasma hominis and lentivirus. The polypeptide is Protein GPR15LG (GPR15LG) (Sus scrofa (Pig)).